The following is a 351-amino-acid chain: Ion-translocating oxidoreductase complex subunit D (351 aa).

Helical transmembrane passes span 18 to 38 (IMLLVILACIPGIIAQTYFFG), 42 to 62 (LIQVALAIMTAVLAEGAVLHL), 87 to 107 (LPPLAPWWMIVLGTAFAIIIA), and 121 to 141 (PAMVGYVVLLISFPVQMTSWL). An FMN phosphoryl threonine modification is found at T185. Transmembrane regions (helical) follow at residues 212-232 (LAGIGWQWINLGFLAGGLLLL), 241-261 (IPVSFLLALAGCAAISWMIAP), 264-284 (FAPPMLHLFSGATMLGAFFIA), 298-318 (LIFGALIGILVWLIRVYGGYP), and 320-340 (GVAFAVLLANICVPLIDHYTQ).

The protein belongs to the NqrB/RnfD family. In terms of assembly, the complex is composed of six subunits: RnfA, RnfB, RnfC, RnfD, RnfE and RnfG. The cofactor is FMN.

Its subcellular location is the cell inner membrane. In terms of biological role, part of a membrane-bound complex that couples electron transfer with translocation of ions across the membrane. The polypeptide is Ion-translocating oxidoreductase complex subunit D (Yersinia enterocolitica serotype O:8 / biotype 1B (strain NCTC 13174 / 8081)).